A 62-amino-acid chain; its full sequence is MAKKVKGNRVQVVLECAEHKESGLPGTSRYITTKNKKNTTTRLELKKYNPILKKMTLHKEIK.

This sequence belongs to the bacterial ribosomal protein bL33 family.

This is Large ribosomal subunit protein bL33 from Azobacteroides pseudotrichonymphae genomovar. CFP2.